Reading from the N-terminus, the 522-residue chain is MVDDKEKNMKCLTFFLMLPETVKNRSKKSSKKANTSSSSSNSSKLPPVCYEIITLKTKKKKMAADIFPRKKPANSSSTSVQQYHQQNLSNNNLIPAPNWQGLYPTIRERNAMMFNNDLMADVHFVVGPPGGTQRLPGHKYVLAVGSSVFHAMFYGELAEDKDEIRIPDVEPAAFLAMLKYIYCDEIDLAADTVLATLYAAKKYIVPHLARACVNFLETSLSAKNACVLLSQSCLFEEPDLTQRCWEVIDAQAELALKSEGFCDIDFQTLESILRRETLNAKEIVVFEAALNWAEVECQRQDLALSIENKRKVLGKALYLIRIPTMALDDFANGAAQSGVLTLNETNDIFLWYTAAKKPELQFVSKARKGLVPQRCHRFQSCAYRSNQWRYRGRCDSIQFAVDKRVFIAGFGLYGSSCGSAEYSAKIELKRQGVVLGQNLSKYFSDGSSNTFPVWFEYPVQIEPDTFYTASVILDGNELSYFGQEGMTEVQCGKVTVQFQCSSDSTNGTGVQGGQIPELIFYA.

The segment at 25-44 is disordered; it reads RSKKSSKKANTSSSSSNSSK. Low complexity predominate over residues 32-44; that stretch reads KANTSSSSSNSSK. A BTB domain is found at 120–190; that stretch reads ADVHFVVGPP…IYCDEIDLAA (71 aa). Residues 235–300 enclose the BACK domain; that stretch reads FEEPDLTQRC…NWAEVECQRQ (66 aa).

It localises to the cytoplasm. It is found in the cytosol. The protein resides in the nucleus. Functionally, acts as a key regulator of dendritic field orientation during development of sensory cortex. Also directs dendrites toward active axon terminals when ectopically expressed. The protein is BTB/POZ domain-containing protein 3 (BTBD3) of Homo sapiens (Human).